We begin with the raw amino-acid sequence, 186 residues long: Sec-independent protein translocase protein TatB (186 aa).

The helical transmembrane segment at 1–21 threads the bilayer; that stretch reads MFDIGFSELILLMVLGLVVLG. Residues 120–186 form a disordered region; sequence NAEKSQNAIS…SKSQSSKTKS (67 aa). The span at 177 to 186 shows a compositional bias: polar residues; the sequence is SKSQSSKTKS.

Belongs to the TatB family. In terms of assembly, the Tat system comprises two distinct complexes: a TatABC complex, containing multiple copies of TatA, TatB and TatC subunits, and a separate TatA complex, containing only TatA subunits. Substrates initially bind to the TatABC complex, which probably triggers association of the separate TatA complex to form the active translocon.

It is found in the cell inner membrane. In terms of biological role, part of the twin-arginine translocation (Tat) system that transports large folded proteins containing a characteristic twin-arginine motif in their signal peptide across membranes. Together with TatC, TatB is part of a receptor directly interacting with Tat signal peptides. TatB may form an oligomeric binding site that transiently accommodates folded Tat precursor proteins before their translocation. The chain is Sec-independent protein translocase protein TatB from Haemophilus influenzae (strain ATCC 51907 / DSM 11121 / KW20 / Rd).